The primary structure comprises 257 residues: Type III pantothenate kinase (257 aa).

24–31 (MIGNSRLH) serves as a coordination point for ATP. Substrate is bound by residues Tyr96 and 100 to 103 (GIDR). The Proton acceptor role is filled by Asp102. Asp122 serves as a coordination point for K(+). ATP is bound at residue Thr125. Thr180 serves as a coordination point for substrate.

The protein belongs to the type III pantothenate kinase family. Homodimer. It depends on NH4(+) as a cofactor. K(+) is required as a cofactor.

The protein localises to the cytoplasm. The catalysed reaction is (R)-pantothenate + ATP = (R)-4'-phosphopantothenate + ADP + H(+). It participates in cofactor biosynthesis; coenzyme A biosynthesis; CoA from (R)-pantothenate: step 1/5. Functionally, catalyzes the phosphorylation of pantothenate (Pan), the first step in CoA biosynthesis. In Synechocystis sp. (strain ATCC 27184 / PCC 6803 / Kazusa), this protein is Type III pantothenate kinase.